Reading from the N-terminus, the 327-residue chain is Porphobilinogen deaminase (327 aa).

Cysteine 250 bears the S-(dipyrrolylmethanemethyl)cysteine mark.

This sequence belongs to the HMBS family. Monomer. Dipyrromethane serves as cofactor.

The catalysed reaction is 4 porphobilinogen + H2O = hydroxymethylbilane + 4 NH4(+). The protein operates within porphyrin-containing compound metabolism; protoporphyrin-IX biosynthesis; coproporphyrinogen-III from 5-aminolevulinate: step 2/4. Tetrapolymerization of the monopyrrole PBG into the hydroxymethylbilane pre-uroporphyrinogen in several discrete steps. The sequence is that of Porphobilinogen deaminase from Paraburkholderia phymatum (strain DSM 17167 / CIP 108236 / LMG 21445 / STM815) (Burkholderia phymatum).